A 564-amino-acid polypeptide reads, in one-letter code: NAD-dependent malic enzyme (564 aa).

The active-site Proton donor is tyrosine 102. Arginine 155 is a binding site for NAD(+). Residue lysine 173 is the Proton acceptor of the active site. The a divalent metal cation site is built by glutamate 244, aspartate 245, and aspartate 268. NAD(+) contacts are provided by aspartate 268 and asparagine 417.

The protein belongs to the malic enzymes family. In terms of assembly, homotetramer. Mg(2+) serves as cofactor. It depends on Mn(2+) as a cofactor.

The enzyme catalyses (S)-malate + NAD(+) = pyruvate + CO2 + NADH. The catalysed reaction is oxaloacetate + H(+) = pyruvate + CO2. The protein is NAD-dependent malic enzyme of Pseudomonas aeruginosa (strain UCBPP-PA14).